The following is a 287-amino-acid chain: Probable endoribonuclease YicC (287 aa).

The protein belongs to the YicC/YloC family. It depends on a divalent metal cation as a cofactor.

Functionally, probably a ssRNA endonuclease. Might contribute to small RNA (sRNA) regulation. The polypeptide is Probable endoribonuclease YicC (Salmonella typhimurium (strain LT2 / SGSC1412 / ATCC 700720)).